The primary structure comprises 239 residues: 1-(5-phosphoribosyl)-5-[(5-phosphoribosylamino)methylideneamino] imidazole-4-carboxamide isomerase (239 aa).

The Proton acceptor role is filled by Asp8. Asp129 functions as the Proton donor in the catalytic mechanism.

The protein belongs to the HisA/HisF family.

Its subcellular location is the cytoplasm. The enzyme catalyses 1-(5-phospho-beta-D-ribosyl)-5-[(5-phospho-beta-D-ribosylamino)methylideneamino]imidazole-4-carboxamide = 5-[(5-phospho-1-deoxy-D-ribulos-1-ylimino)methylamino]-1-(5-phospho-beta-D-ribosyl)imidazole-4-carboxamide. It functions in the pathway amino-acid biosynthesis; L-histidine biosynthesis; L-histidine from 5-phospho-alpha-D-ribose 1-diphosphate: step 4/9. The chain is 1-(5-phosphoribosyl)-5-[(5-phosphoribosylamino)methylideneamino] imidazole-4-carboxamide isomerase from Bacillus cereus (strain Q1).